Reading from the N-terminus, the 24-residue chain is Probable caffeoyl-CoA O-methyltransferase (24 aa).

The protein belongs to the class I-like SAM-binding methyltransferase superfamily. Cation-dependent O-methyltransferase family. CCoAMT subfamily. A divalent metal cation serves as cofactor.

The catalysed reaction is (E)-caffeoyl-CoA + S-adenosyl-L-methionine = (E)-feruloyl-CoA + S-adenosyl-L-homocysteine + H(+). The protein operates within aromatic compound metabolism; phenylpropanoid biosynthesis. In terms of biological role, methylates caffeoyl-CoA to feruloyl-CoA and 5-hydroxyferuloyl-CoA to sinapoyl-CoA. Plays a role in the synthesis of feruloylated polysaccharides. Involved in the reinforcement of the plant cell wall. Also involved in the responding to wounding or pathogen challenge by the increased formation of cell wall-bound ferulic acid polymers. In Pinus pinaster (Maritime pine), this protein is Probable caffeoyl-CoA O-methyltransferase.